A 350-amino-acid chain; its full sequence is MAIEQHIDGLLRHVGLRVDHGLTPVSASLVLLAGIGALSVGTFALRLVRLFADVYILPGNSVSKYGANKKDLTRASWAVVTGATDGIGREFALQLARKGFNIVLVSRSPEKLGSVAAEIEAATPGVRTKTQAIDFALGDERQYEGLEHTVKGLNVGVLVNNVGKSHNMPVTFTETSEEEMEDIIEINVVSVLRVSKMIIPGMVDRKRGLVLNLGSFAGQVTTPMLATYAGSKAFLSGWSQALGEEVKRSNVDVSLLNTYFVVSNLSKIRKSSAMIPTPKQYVTQVLKTLGRNGGAVGRPYTATPWPGHALVDWATTFVLPRGWLLSYTYGQQVATRKRALNKAHKAVKSA.

A helical transmembrane segment spans residues 28 to 48 (SLVLLAGIGALSVGTFALRLV). Valine 79, aspartate 134, asparagine 161, lysine 196, tyrosine 228, lysine 232, valine 261, and serine 263 together coordinate NADP(+). Catalysis depends on tyrosine 228, which acts as the Proton donor. The Lowers pKa of active site Tyr role is filled by lysine 232.

It belongs to the short-chain dehydrogenases/reductases (SDR) family.

The protein localises to the endoplasmic reticulum membrane. The enzyme catalyses a very-long-chain (3R)-3-hydroxyacyl-CoA + NADP(+) = a very-long-chain 3-oxoacyl-CoA + NADPH + H(+). It participates in lipid metabolism; fatty acid biosynthesis. In terms of biological role, component of the microsomal membrane bound fatty acid elongation system, which produces the 26-carbon very long-chain fatty acids (VLCFA) from palmitate. Catalyzes the reduction of the 3-ketoacyl-CoA intermediate that is formed in each cycle of fatty acid elongation. VLCFAs serve as precursors for ceramide and sphingolipids. This chain is Very-long-chain 3-oxoacyl-CoA reductase, found in Mycosarcoma maydis (Corn smut fungus).